A 177-amino-acid polypeptide reads, in one-letter code: Translationally-controlled tumor protein homolog (177 aa).

The TCTP domain maps to 1 to 177 (MIIYRDLFSG…IKQGLVVEKC (177 aa)).

This sequence belongs to the TCTP family.

The protein resides in the cytoplasm. Functionally, involved in calcium binding and microtubule stabilization. The chain is Translationally-controlled tumor protein homolog from Trichinella pseudospiralis (Parasitic roundworm).